Consider the following 546-residue polypeptide: Carboxypeptidase Y homolog A (546 aa).

The signal sequence occupies residues 1-17 (MKLLASTVLVGAAAASI). Positions 18 to 132 (TPQQQVLQNP…KLEQYNLRAK (115 aa)) are excised as a propeptide. Cystine bridges form between Cys186–Cys426, Cys320–Cys334, Cys344–Cys367, Cys351–Cys360, and Cys389–Cys396. Residue Asn217 is glycosylated (N-linked (GlcNAc...) asparagine). Ser273 is a catalytic residue. Residue Asp465 is part of the active site. Asn512 carries N-linked (GlcNAc...) asparagine glycosylation. His523 is an active-site residue.

Belongs to the peptidase S10 family.

Its subcellular location is the vacuole. It carries out the reaction Release of a C-terminal amino acid with broad specificity.. Vacuolar carboxypeptidase involved in degradation of small peptides. Digests preferentially peptides containing an aliphatic or hydrophobic residue in P1' position, as well as methionine, leucine or phenylalanine in P1 position of ester substrate. The chain is Carboxypeptidase Y homolog A (CPYA) from Botryotinia fuckeliana (strain B05.10) (Noble rot fungus).